The primary structure comprises 595 residues: Aspartate--tRNA(Asp/Asn) ligase (595 aa).

E178 contacts L-aspartate. The aspartate stretch occupies residues 202-205 (QLFK). Residue R224 coordinates L-aspartate. ATP-binding positions include 224 to 226 (RDE) and Q233. H458 serves as a coordination point for L-aspartate. E488 contacts ATP. R495 provides a ligand contact to L-aspartate. 540–543 (GLDR) contributes to the ATP binding site.

It belongs to the class-II aminoacyl-tRNA synthetase family. Type 1 subfamily. In terms of assembly, homodimer.

It localises to the cytoplasm. It carries out the reaction tRNA(Asx) + L-aspartate + ATP = L-aspartyl-tRNA(Asx) + AMP + diphosphate. Functionally, aspartyl-tRNA synthetase with relaxed tRNA specificity since it is able to aspartylate not only its cognate tRNA(Asp) but also tRNA(Asn). Reaction proceeds in two steps: L-aspartate is first activated by ATP to form Asp-AMP and then transferred to the acceptor end of tRNA(Asp/Asn). This Trichodesmium erythraeum (strain IMS101) protein is Aspartate--tRNA(Asp/Asn) ligase.